The chain runs to 592 residues: Laccase PFICI_06862 (592 aa).

Positions 1 to 19 are cleaved as a signal peptide; the sequence is MYIQTQFASLLLLAGTSLA. Residue N26 is glycosylated (N-linked (GlcNAc...) asparagine). Plastocyanin-like domains are found at residues 32–142 and 173–350; these read QWSS…WIAP and VVIS…RYPG. Cu cation-binding residues include H78, H80, H123, and H125. Residues N370, N407, and N454 are each glycosylated (N-linked (GlcNAc...) asparagine). The Plastocyanin-like 3 domain maps to 445–563; that stretch reads SDVQGGSMQN…AGQQVVLLEG (119 aa). Residue H475 coordinates Cu cation. N524 carries N-linked (GlcNAc...) asparagine glycosylation.

Belongs to the multicopper oxidase family.

The protein resides in the cell surface. It participates in pigment biosynthesis; melanin biosynthesis. Functionally, laccase involved the biosynthesis of dihydroxynaphthalene (DHN)-melanin, a bluish-green pigment forming a dark layer in the conidial wall that protects the conidia from UV radiations. The first step of the pathway is the production of the pentaketide 1,3,6,8-tetrahydroxynaphthalene (1,3,6,8-THN or T4HN) by the polyketide synthase PfmaE though condensation of acetyl-CoA with malonyl-CoA. T4HN is not stable and easily oxidizes into the stable form flaviolin. T4HN is also substrate of the hydroxynaphthalene reductase PfmaG to yield scytalone. The scytalone dehydratase PfmaJ then reduces scytalone to 1,3,8-THN. 1,3,8-THN is then substrate of the hydroxynaphthalene reductase PfmaI to yield vermelone. Vermelone is further converted by the multicopper oxidase PfmaD to 1,8-DHN. Finally the laccase PFICI_06862 transforms 1,8-DHN to DHN-melanin. The roles of the 5-oxoprolinase PfmaA and the proline iminopeptidase PfmaB within the cluster have not been elucidated yet. The sequence is that of Laccase PFICI_06862 from Pestalotiopsis fici (strain W106-1 / CGMCC3.15140).